We begin with the raw amino-acid sequence, 445 residues long: N-succinylarginine dihydrolase (445 aa).

Substrate-binding positions include 19-28 (AGLSFGNVAS), N110, and 137-138 (HR). E174 is an active-site residue. A substrate-binding site is contributed by R214. H250 is a catalytic residue. The substrate site is built by D252 and N363. C369 serves as the catalytic Nucleophile.

It belongs to the succinylarginine dihydrolase family. Homodimer.

The enzyme catalyses N(2)-succinyl-L-arginine + 2 H2O + 2 H(+) = N(2)-succinyl-L-ornithine + 2 NH4(+) + CO2. The protein operates within amino-acid degradation; L-arginine degradation via AST pathway; L-glutamate and succinate from L-arginine: step 2/5. Functionally, catalyzes the hydrolysis of N(2)-succinylarginine into N(2)-succinylornithine, ammonia and CO(2). This Shewanella pealeana (strain ATCC 700345 / ANG-SQ1) protein is N-succinylarginine dihydrolase.